Consider the following 356-residue polypeptide: Magnesium-protoporphyrin IX monomethyl ester [oxidative] cyclase (356 aa).

This sequence belongs to the AcsF family. Requires Fe cation as cofactor.

It carries out the reaction Mg-protoporphyrin IX 13-monomethyl ester + 3 NADPH + 3 O2 + 2 H(+) = 3,8-divinyl protochlorophyllide a + 3 NADP(+) + 5 H2O. It participates in porphyrin-containing compound metabolism; chlorophyll biosynthesis (light-independent). Functionally, catalyzes the formation of the isocyclic ring in chlorophyll biosynthesis. Mediates the cyclase reaction, which results in the formation of divinylprotochlorophyllide (Pchlide) characteristic of all chlorophylls from magnesium-protoporphyrin IX 13-monomethyl ester (MgPMME). This Synechococcus sp. (strain CC9605) protein is Magnesium-protoporphyrin IX monomethyl ester [oxidative] cyclase.